A 156-amino-acid chain; its full sequence is ATP synthase subunit b (156 aa).

Residues 5 to 25 traverse the membrane as a helical segment; sequence LTLIGQAIAFAFFVAFCMKFV.

This sequence belongs to the ATPase B chain family. As to quaternary structure, F-type ATPases have 2 components, F(1) - the catalytic core - and F(0) - the membrane proton channel. F(1) has five subunits: alpha(3), beta(3), gamma(1), delta(1), epsilon(1). F(0) has three main subunits: a(1), b(2) and c(10-14). The alpha and beta chains form an alternating ring which encloses part of the gamma chain. F(1) is attached to F(0) by a central stalk formed by the gamma and epsilon chains, while a peripheral stalk is formed by the delta and b chains.

It localises to the cell inner membrane. Its function is as follows. F(1)F(0) ATP synthase produces ATP from ADP in the presence of a proton or sodium gradient. F-type ATPases consist of two structural domains, F(1) containing the extramembraneous catalytic core and F(0) containing the membrane proton channel, linked together by a central stalk and a peripheral stalk. During catalysis, ATP synthesis in the catalytic domain of F(1) is coupled via a rotary mechanism of the central stalk subunits to proton translocation. Component of the F(0) channel, it forms part of the peripheral stalk, linking F(1) to F(0). In Acinetobacter baumannii (strain SDF), this protein is ATP synthase subunit b.